The chain runs to 329 residues: uncharacterized protein (329 aa).

The SIS domain occupies 38–184 (IVKLILKSQE…MACLMRAKNF (147 aa)). 56–61 (GVGKSA) provides a ligand contact to ATP. 2 consecutive CBS domains span residues 211-267 (QTTN…GLSL) and 276-329 (TLKP…GLKA).

It belongs to the SIS family. GutQ/KpsF subfamily.

This is an uncharacterized protein from Helicobacter pylori (strain J99 / ATCC 700824) (Campylobacter pylori J99).